The chain runs to 76 residues: RNA-binding protein KhpA (76 aa).

The KH domain occupies 30–76; that stretch reads GEVLEVRVNPEDLGRVIGRSGRTAKALRTLVTALADGRRVRVDVVDD.

It belongs to the KhpA RNA-binding protein family.

The protein resides in the cytoplasm. Functionally, a probable RNA-binding protein. The polypeptide is RNA-binding protein KhpA (Leifsonia xyli subsp. xyli (strain CTCB07)).